Here is a 327-residue protein sequence, read N- to C-terminus: uncharacterized protein (327 aa).

Disordered stretches follow at residues 127–170 (LSEF…GIYR) and 298–327 (NFED…LKRR). Ser153, Ser154, and Ser309 each carry phosphoserine. Residues 317–327 (YRKRKKNLKRR) are compositionally biased toward basic residues.

This is an uncharacterized protein from Schizosaccharomyces pombe (strain 972 / ATCC 24843) (Fission yeast).